The following is a 137-amino-acid chain: Sec-independent protein translocase protein TatB (137 aa).

The chain crosses the membrane as a helical span at residues 2 to 22 (FANIGWGEMLILVIAGLVILG). The segment at 92 to 137 (FFTGKFDQQNGKPAAGQEKPVTPVNPPVTATPPSESTATPFDSDAT) is disordered. Over residues 122–131 (TPPSESTATP) the composition is skewed to low complexity.

This sequence belongs to the TatB family. The Tat system comprises two distinct complexes: a TatABC complex, containing multiple copies of TatA, TatB and TatC subunits, and a separate TatA complex, containing only TatA subunits. Substrates initially bind to the TatABC complex, which probably triggers association of the separate TatA complex to form the active translocon.

It is found in the cell membrane. Part of the twin-arginine translocation (Tat) system that transports large folded proteins containing a characteristic twin-arginine motif in their signal peptide across membranes. Together with TatC, TatB is part of a receptor directly interacting with Tat signal peptides. TatB may form an oligomeric binding site that transiently accommodates folded Tat precursor proteins before their translocation. This Mycobacterium sp. (strain JLS) protein is Sec-independent protein translocase protein TatB.